Consider the following 482-residue polypeptide: Retrovirus-related Pol polyprotein from type-1 retrotransposable element R2 (482 aa).

Residues 1-84 (AYADDLILFA…DYFKYLGSRY (84 aa)) form the Reverse transcriptase domain. The interval 208–482 (QIPAVEKFYQ…ATGGRGRGDI (275 aa)) is nucleic acid-binding endonuclease.

It catalyses the reaction DNA(n) + a 2'-deoxyribonucleoside 5'-triphosphate = DNA(n+1) + diphosphate. The chain is Retrovirus-related Pol polyprotein from type-1 retrotransposable element R2 from Popillia japonica (Japanese beetle).